A 508-amino-acid chain; its full sequence is MAYERYEPVIGLEVHVQLQTNAKIFSPDAAAFGAAPNTQVDPISLGHPGTLPVLNETVVKHALRLGVATHCSIADRSAFARKHYFYPDLPKGYQISQYDTPICYDGYLEVFPGEEEDASPSAPDSRRVGLTRIHMEEDAGKSVHASAGGTTRLDNNRCGVPLLEMVTEPDLRSPREASLFLQRLRQLVRYLGISDGNMEEGSLRCDANVSVRPQGREAFGTRTELKNMNSMRHVEQALDYEIARQIAAEERGESITQQTLLWDADAGTTRPMRSKEEAHDYRYLPDPDLVEVRIEDATVDEVRANLPELPRARRRRFVEEVGLPAYDAGVLTEERAVADYFEEALRHLYKRTKGGDTDAQAKAVSNFIMTEVMRVLNERDLSVSELGVGPERLAQLVFLRLQDKVSSNGAQEVFEAMLDAPDKSAGRIADERDLIQVTDRGAIAPVVEDVLNDNPDKVNTYLGGKDGLLGFFIGQVMQRFDGSPNPELVRSLLREKLDARRDTANVDE.

It belongs to the GatB/GatE family. GatB subfamily. Heterotrimer of A, B and C subunits.

The enzyme catalyses L-glutamyl-tRNA(Gln) + L-glutamine + ATP + H2O = L-glutaminyl-tRNA(Gln) + L-glutamate + ADP + phosphate + H(+). The catalysed reaction is L-aspartyl-tRNA(Asn) + L-glutamine + ATP + H2O = L-asparaginyl-tRNA(Asn) + L-glutamate + ADP + phosphate + 2 H(+). Allows the formation of correctly charged Asn-tRNA(Asn) or Gln-tRNA(Gln) through the transamidation of misacylated Asp-tRNA(Asn) or Glu-tRNA(Gln) in organisms which lack either or both of asparaginyl-tRNA or glutaminyl-tRNA synthetases. The reaction takes place in the presence of glutamine and ATP through an activated phospho-Asp-tRNA(Asn) or phospho-Glu-tRNA(Gln). This is Aspartyl/glutamyl-tRNA(Asn/Gln) amidotransferase subunit B from Salinibacter ruber (strain DSM 13855 / M31).